The primary structure comprises 623 residues: Heterogeneous nuclear ribonucleoprotein Q (623 aa).

Position 2 is an N-acetylalanine (alanine 2). Serine 159 carries the post-translational modification Phosphoserine. 3 RRM domains span residues 162-241 (TEIF…ISVA), 243-325 (NRLF…WADP), and 338-408 (KVLF…FAKP). A Glycyl lysine isopeptide (Lys-Gly) (interchain with G-Cter in SUMO2) cross-link involves residue lysine 168. Lysine 221 is modified (N6-acetyllysine). Position 363 is an N6-acetyllysine (lysine 363). Position 373 is a phosphotyrosine (tyrosine 373). The interval 400-561 (NIEIVFAKPP…GARGGRGGNV (162 aa)) is interaction with APOBEC1. Asymmetric dimethylarginine; by PRMT1; alternate is present on arginine 444. Arginine 444 is modified (omega-N-methylarginine; by PRMT1; alternate). 6 repeat units span residues 448–450 (RGG), 451–453 (RGG), 460–464 (YYGYE), 469–472 (YYGY), 478–480 (RGG), and 485–488 (YYGY). Positions 448–559 (RGGRGGYGYP…VRGARGGRGG (112 aa)) are 8 X 3 AA repeats of R-G-G. Residues 460–488 (YYGYEDYYDYYGYDYHNYRGGYEDPYYGY) are 3 X 4 AA repeats of Y-Y-G-Y. An Omega-N-methylarginine; by PRMT1 modification is found at arginine 496. The tract at residues 497–623 (GRGGRGARGA…YQDTFGQQWK (127 aa)) is disordered. One copy of the 1-4 repeat lies at 498–500 (RGG). Residues 504-522 (RGAAPSRGRGAAPPRGRAG) are compositionally biased toward low complexity. Arginine 510 is modified (asymmetric dimethylarginine; by PRMT1). An asymmetric dimethylarginine; by PRMT1; alternate mark is found at arginine 518, arginine 526, arginine 536, and arginine 539. Omega-N-methylarginine; by PRMT1; alternate is present on residues arginine 518, arginine 526, arginine 536, and arginine 539. Residues 518–549 (RGRAGYSQRGGPGSARGVRGARGGAQQQRGRG) are interaction with SMN. One copy of the 1-5 repeat lies at 526–528 (RGG). A run of 3 repeats spans residues 539–541 (RGG), 554–556 (RGG), and 557–559 (RGG). The segment covering 550 to 562 (VRGARGGRGGNVG) has biased composition (gly residues). Residues 564–578 (KRKADGYNQPDSKRR) carry the Bipartite nuclear localization signal motif. Polar residues predominate over residues 580 to 595 (TNNQNWGSQPIAQQPL). At serine 587 the chain carries Phosphoserine. Lysine 607 is covalently cross-linked (Glycyl lysine isopeptide (Lys-Gly) (interchain with G-Cter in SUMO2)). Residues 611–623 (QEFYQDTFGQQWK) show a composition bias toward polar residues.

In terms of assembly, isoform 1 is a component of the APOB mRNA editosome complex and interacts with APOBEC1 and A1CF (APOBEC1 complementation factor). Part of a complex associated with the FOS mCRD domain and consisting of PABPC1, PAIP1, CSDE1/UNR, HNRPD and SYNCRIP. Isoform 3 interacts with HNRPR. Interacts with POLR2A hyperphosphorylated C-terminal domain. Isoform 1, isoform 2 and isoform 3 interact with SMN. Isoform 3 interacts through its C-terminal domain with SYT7, SYT8 and SYT9. The non-phosphorylated and phosphorylated forms are colocalized with PAIP1 in polysomes. Interacts with HABP4. Identified in a histone pre-mRNA complex, at least composed of ERI1, LSM11, SLBP, SNRPB, SYNCRIP and YBX1. Identified in the spliceosome C complex. Component of the coding region determinant (CRD)-mediated complex, composed of DHX9, HNRNPU, IGF2BP1, SYNCRIP and YBX1. Identified in a mRNP complex, at least composed of DHX9, DDX3X, ELAVL1, HNRNPU, IGF2BP1, ILF3, PABPC1, PCBP2, PTBP2, STAU1, STAU2, SYNCRIP and YBX1. Identified in a mRNP granule complex, at least composed of ACTB, ACTN4, DHX9, ERG, HNRNPA1, HNRNPA2B1, HNRNPAB, HNRNPD, HNRNPL, HNRNPR, HNRNPU, HSPA1, HSPA8, IGF2BP1, ILF2, ILF3, NCBP1, NCL, PABPC1, PABPC4, PABPN1, RPLP0, RPS3, RPS3A, RPS4X, RPS8, RPS9, SYNCRIP, YBX1 and untranslated mRNAs. Interacts with GTPBP1. Component of the GAIT complex; in humans the complex assembly seems to be a two-step process in which EPRS1 first associates with SYNCRIP to form a pre-GAIT complex which is deficient in GAIT element binding. (Microbial infection) Interacts with minute virus of mice (MVM) NS1 protein. As to quaternary structure, (Microbial infection) Interacts with herpes virus 8/HHV-8 protein vIRF-1; this interaction induces ubiquitination and degradation of SYNCRIP. Phosphorylated on tyrosine. The membrane-bound form found in microsomes is phosphorylated in vitro by insulin receptor tyrosine kinase (INSR). Phosphorylation is inhibited upon binding to RNA, whereas the cytoplasmic form is poorly phosphorylated. As to expression, ubiquitously expressed. Detected in heart, brain, pancreas, placenta, spleen, lung, liver, skeletal muscle, kidney, thymus, prostate, uterus, small intestine, colon, peripheral blood and testis.

The protein resides in the cytoplasm. It localises to the microsome. The protein localises to the endoplasmic reticulum. Its subcellular location is the nucleus. It is found in the nucleoplasm. Heterogenous nuclear ribonucleoprotein (hnRNP) implicated in mRNA processing mechanisms. Component of the CRD-mediated complex that promotes MYC mRNA stability. Isoform 1, isoform 2 and isoform 3 are associated in vitro with pre-mRNA, splicing intermediates and mature mRNA protein complexes. Isoform 1 binds to apoB mRNA AU-rich sequences. Isoform 1 is part of the APOB mRNA editosome complex and may modulate the postranscriptional C to U RNA-editing of the APOB mRNA through either by binding to A1CF (APOBEC1 complementation factor), to APOBEC1 or to RNA itself. May be involved in translationally coupled mRNA turnover. Implicated with other RNA-binding proteins in the cytoplasmic deadenylation/translational and decay interplay of the FOS mRNA mediated by the major coding-region determinant of instability (mCRD) domain. Interacts in vitro preferentially with poly(A) and poly(U) RNA sequences. Isoform 3 may be involved in cytoplasmic vesicle-based mRNA transport through interaction with synaptotagmins. Component of the GAIT (gamma interferon-activated inhibitor of translation) complex which mediates interferon-gamma-induced transcript-selective translation inhibition in inflammation processes. Upon interferon-gamma activation assembles into the GAIT complex which binds to stem loop-containing GAIT elements in the 3'-UTR of diverse inflammatory mRNAs (such as ceruplasmin) and suppresses their translation; seems not to be essential for GAIT complex function. The sequence is that of Heterogeneous nuclear ribonucleoprotein Q (SYNCRIP) from Homo sapiens (Human).